The chain runs to 306 residues: Homoserine O-acetyltransferase (306 aa).

Catalysis depends on C142, which acts as the Acyl-thioester intermediate. Positions 163 and 192 each coordinate substrate. Catalysis depends on H235, which acts as the Proton acceptor. The active site involves E237. R249 contributes to the substrate binding site.

This sequence belongs to the MetA family.

The protein resides in the cytoplasm. It carries out the reaction L-homoserine + acetyl-CoA = O-acetyl-L-homoserine + CoA. The protein operates within amino-acid biosynthesis; L-methionine biosynthesis via de novo pathway; O-acetyl-L-homoserine from L-homoserine: step 1/1. Its function is as follows. Transfers an acetyl group from acetyl-CoA to L-homoserine, forming acetyl-L-homoserine. The sequence is that of Homoserine O-acetyltransferase from Clostridium botulinum (strain Alaska E43 / Type E3).